A 90-amino-acid polypeptide reads, in one-letter code: Small ribosomal subunit protein uS15 (90 aa).

The protein belongs to the universal ribosomal protein uS15 family. As to quaternary structure, part of the 30S ribosomal subunit. Forms a bridge to the 50S subunit in the 70S ribosome, contacting the 23S rRNA.

In terms of biological role, one of the primary rRNA binding proteins, it binds directly to 16S rRNA where it helps nucleate assembly of the platform of the 30S subunit by binding and bridging several RNA helices of the 16S rRNA. Its function is as follows. Forms an intersubunit bridge (bridge B4) with the 23S rRNA of the 50S subunit in the ribosome. This is Small ribosomal subunit protein uS15 from Paraburkholderia xenovorans (strain LB400).